The sequence spans 568 residues: Proline--tRNA ligase (568 aa).

This sequence belongs to the class-II aminoacyl-tRNA synthetase family. ProS type 1 subfamily. As to quaternary structure, homodimer.

It localises to the cytoplasm. The enzyme catalyses tRNA(Pro) + L-proline + ATP = L-prolyl-tRNA(Pro) + AMP + diphosphate. In terms of biological role, catalyzes the attachment of proline to tRNA(Pro) in a two-step reaction: proline is first activated by ATP to form Pro-AMP and then transferred to the acceptor end of tRNA(Pro). As ProRS can inadvertently accommodate and process non-cognate amino acids such as alanine and cysteine, to avoid such errors it has two additional distinct editing activities against alanine. One activity is designated as 'pretransfer' editing and involves the tRNA(Pro)-independent hydrolysis of activated Ala-AMP. The other activity is designated 'posttransfer' editing and involves deacylation of mischarged Ala-tRNA(Pro). The misacylated Cys-tRNA(Pro) is not edited by ProRS. This Alkalilimnicola ehrlichii (strain ATCC BAA-1101 / DSM 17681 / MLHE-1) protein is Proline--tRNA ligase.